The sequence spans 261 residues: Hemin import ATP-binding protein HmuV (261 aa).

The region spanning leucine 3–glutamate 243 is the ABC transporter domain. Glycine 35–serine 42 serves as a coordination point for ATP.

It belongs to the ABC transporter superfamily. Heme (hemin) importer (TC 3.A.1.14.5) family. The complex is composed of two ATP-binding proteins (HmuV), two transmembrane proteins (HmuU) and a solute-binding protein (HmuT).

It is found in the cell inner membrane. Functionally, part of the ABC transporter complex HmuTUV involved in hemin import. Responsible for energy coupling to the transport system. This is Hemin import ATP-binding protein HmuV from Bordetella avium (strain 197N).